A 1013-amino-acid chain; its full sequence is Probable ubiquitination network signaling protein acrB (1013 aa).

Disordered stretches follow at residues 1 to 65 (MPRS…NSDT) and 105 to 137 (SYGQ…GSNT). Residues 30-65 (QKSNGQLNGNANGSSAPISGPSSQVDWPSSRSNSDT) show a composition bias toward polar residues. A run of 3 helical transmembrane segments spans residues 158–178 (IAIL…VQFL), 211–231 (LGTM…FMWT), and 254–274 (SGKN…LHLI). Positions 339–367 (RRSMAKNRAPAPPRTGKRVDTEASAGSQT) are disordered. A coiled-coil region spans residues 596 to 782 (TTLKNSIVNA…REQDQAKVEA (187 aa)). Polar residues predominate over residues 875 to 899 (SPLQHASSPIGPTSSRPTSPTQAPS). Disordered stretches follow at residues 875–902 (SPLQ…SYLQ) and 953–1013 (DLSE…GKGN). Residues 954 to 965 (LSEKVVDKRRSS) are compositionally biased toward basic and acidic residues. Positions 993–1002 (SGSGGSGSGS) are enriched in gly residues. Positions 1003 to 1013 (GSPSSATGKGN) are enriched in low complexity.

It belongs to the acrB family.

The protein localises to the membrane. In terms of biological role, component of the regulatory network controlling carbon source utilization through ubiquitination and deubiquitination involving creA, creB, creC, creD and acrB. Involved in resistance to acriflavine, and required for normal growth on a range of sole carbon sources, including fructose, cellobiose, raffinose, and starch, and reduced utilization of amino acids, including GABA and beta-alanine, as sole carbon and nitrogen sources. The protein is Probable ubiquitination network signaling protein acrB (acrB) of Aspergillus oryzae (strain ATCC 42149 / RIB 40) (Yellow koji mold).